Reading from the N-terminus, the 57-residue chain is Large ribosomal subunit protein bL32 (57 aa).

It belongs to the bacterial ribosomal protein bL32 family.

The chain is Large ribosomal subunit protein bL32 from Staphylococcus aureus (strain MSSA476).